The sequence spans 211 residues: Ribonuclease T (211 aa).

Residues 24 to 198 (VVVDVETGGF…YDAEKTAHLF (175 aa)) form the Exonuclease domain. Asp27, Glu29, His185, and Asp190 together coordinate Mg(2+). Catalysis depends on His185, which acts as the Proton donor/acceptor.

It belongs to the RNase T family. In terms of assembly, homodimer. Mg(2+) serves as cofactor.

Its function is as follows. Trims short 3' overhangs of a variety of RNA species, leaving a one or two nucleotide 3' overhang. Responsible for the end-turnover of tRNA: specifically removes the terminal AMP residue from uncharged tRNA (tRNA-C-C-A). Also appears to be involved in tRNA biosynthesis. The sequence is that of Ribonuclease T from Xylella fastidiosa (strain Temecula1 / ATCC 700964).